We begin with the raw amino-acid sequence, 394 residues long: Gap junction gamma-1 protein (394 aa).

Topologically, residues Met-1–Lys-22 are cytoplasmic. A helical transmembrane segment spans residues Ile-23 to Tyr-45. The Extracellular segment spans residues Asp-46–Arg-75. Residues Phe-76–Ala-95 form a helical membrane-spanning segment. Residues Ile-96–Arg-176 lie on the Cytoplasmic side of the membrane. Residues Ile-177–Leu-199 traverse the membrane as a helical segment. At Tyr-200–Lys-229 the chain is on the extracellular side. A helical membrane pass occupies residues Thr-230–Leu-252. Residues His-253–Ile-394 are Cytoplasmic-facing. The disordered stretch occupies residues Ile-354 to Ile-394. The segment covering Ala-356–Ser-366 has biased composition (polar residues). Residues Ala-374–Ile-394 show a composition bias toward low complexity.

Belongs to the connexin family. Gamma-type subfamily. A connexon is composed of a hexamer of connexins. In terms of tissue distribution, mostly in heart and stomach.

It is found in the cell membrane. The protein resides in the cell junction. The protein localises to the gap junction. One gap junction consists of a cluster of closely packed pairs of transmembrane channels, the connexons, through which materials of low MW diffuse from one cell to a neighboring cell. The sequence is that of Gap junction gamma-1 protein (GJC1) from Gallus gallus (Chicken).